A 260-amino-acid chain; its full sequence is Manganese transport system ATP-binding protein MntA (260 aa).

In terms of domain architecture, ABC transporter spans 10 to 245; sequence ISVDGVSVTY…NLELTFGGLP (236 aa). ATP is bound at residue 43-50; sequence GPNGSGKS.

Belongs to the ABC transporter superfamily.

Functionally, part of an ATP-driven transport system for manganese. The chain is Manganese transport system ATP-binding protein MntA (mntA) from Synechocystis sp. (strain ATCC 27184 / PCC 6803 / Kazusa).